A 139-amino-acid chain; its full sequence is Asp-hemolysin (139 aa).

A propeptide spanning residues 1–5 is cleaved from the precursor; the sequence is MASVQ. The interval 47–79 is disordered; the sequence is TSEDVQQKTAPPGGSVNVNSCGRSDASSGTTGG. Positions 62–75 are enriched in polar residues; that stretch reads VNVNSCGRSDASSG.

This sequence belongs to the aegerolysin family.

This is Asp-hemolysin from Aspergillus fumigatus (strain ATCC MYA-4609 / CBS 101355 / FGSC A1100 / Af293) (Neosartorya fumigata).